The following is a 77-amino-acid chain: U18-lycotoxin-Ls1a (77 aa).

The signal sequence occupies residues 1–22 (MSPKMQALLLLLGLITLLVVHA). The propeptide occupies 23–34 (EEELSENTESER). 4 disulfide bridges follow: C36–C51, C43–C56, C50–C67, and C58–C65.

This sequence belongs to the neurotoxin 02 (plectoxin) family. As to expression, expressed by the venom gland.

It is found in the secreted. In Lycosa singoriensis (Wolf spider), this protein is U18-lycotoxin-Ls1a.